A 317-amino-acid chain; its full sequence is HTH-type transcriptional regulator MetR (317 aa).

The 59-residue stretch at 1–59 folds into the HTH lysR-type domain; that stretch reads MIEVKHLKTLQALRNCGSLAAAAATLHQTQSALSHQFSDLEQRLGFRLFVRKSQPLRFT. A DNA-binding region (H-T-H motif) is located at residues 19 to 38; it reads LAAAAATLHQTQSALSHQFS.

Belongs to the LysR transcriptional regulatory family.

The protein resides in the cytoplasm. Its function is as follows. Control of the last step in methionine biosynthesis; MetR is a positive activator of the metA, metE and metH genes. It is also a negative regulator of its own expression. This is HTH-type transcriptional regulator MetR (metR) from Escherichia coli O157:H7.